The chain runs to 161 residues: Afimbrial adhesin AFA-I (161 aa).

The first 21 residues, 1 to 21 (MKKLAIIGATSVMMMTGTAQA), serve as a signal peptide directing secretion.

Belongs to the Dr-adhesin family.

Its subcellular location is the fimbrium. In terms of biological role, hemagglutinins of uropathogenic E.coli mediate adherence to the upper urinary tract. These adhesins bind to the Dr blood group antigen and also agglutinate human erythrocytes in the presence of D-mannose (mannose-resistant hemagglutination (MRHA)). The polypeptide is Afimbrial adhesin AFA-I (afaE1) (Escherichia coli).